The sequence spans 294 residues: G-protein coupled receptor homolog U51 (294 aa).

Over 1-14 the chain is Extracellular; sequence MKNIDLTNWKLLAE. A helical membrane pass occupies residues 15-35; the sequence is IYEYLFFFSFFFLCLLVIIVV. Topologically, residues 36–47 are cytoplasmic; that stretch reads KFNNSTVGREYT. A helical membrane pass occupies residues 48–68; that stretch reads FSTFSGMLVYILLLPVKMGML. The Extracellular portion of the chain corresponds to 69–79; the sequence is TKMWDVSTDYC. A helical transmembrane segment spans residues 80–102; that stretch reads IILMFLSDFSFIFSSWALTLLAL. At 103-119 the chain is on the cytoplasmic side; that stretch reads ERINNFSFSEIKVNETK. A helical membrane pass occupies residues 120–140; sequence ILKQMSFPIIWVTSIFQAVQI. Residues 141 to 166 lie on the Extracellular side of the membrane; that stretch reads SMKYKKSQMNLEDDYCLLAIERSAEE. A helical membrane pass occupies residues 167–187; it reads AWILLMYTVVIPTFIVFFYVL. Over 188 to 200 the chain is Cytoplasmic; the sequence is NKRFLFLERDLNS. The helical transmembrane segment at 201 to 221 threads the bilayer; the sequence is IVTHLSLFLFFGALCFFPASV. Residues 222–236 are Extracellular-facing; it reads LNEFNCNRLFYGLHE. The chain crosses the membrane as a helical span at residues 237 to 257; that stretch reads LLIVCLELKIFYVPTMTYIIS. Residues 258-294 lie on the Cytoplasmic side of the membrane; sequence CENYRLAAKAFFCKCFKPCFLMPSLRKLQQPTKSTQF.

This sequence belongs to the G-protein coupled receptor 1 family.

The protein localises to the host cell membrane. In Human herpesvirus 7 (strain JI) (HHV-7), this protein is G-protein coupled receptor homolog U51 (U51).